Here is a 319-residue protein sequence, read N- to C-terminus: Phospho-N-acetylmuramoyl-pentapeptide-transferase (319 aa).

A run of 10 helical transmembrane segments spans residues 5–25, 51–71, 79–99, 116–136, 149–169, 172–192, 197–217, 224–244, 252–272, and 299–319; these read LIPF…FIGF, TMGG…VLIW, TWIL…DDGI, LGQI…HFAF, SFLF…AVNL, GLDG…AWIA, NWVI…FFIF, IFMG…VSIF, LLIG…VISF, and VDIV…IIWG.

It belongs to the glycosyltransferase 4 family. MraY subfamily. The cofactor is Mg(2+).

It localises to the cell membrane. The catalysed reaction is UDP-N-acetyl-alpha-D-muramoyl-L-alanyl-gamma-D-glutamyl-L-lysyl-D-alanyl-D-alanine + di-trans,octa-cis-undecaprenyl phosphate = Mur2Ac(oyl-L-Ala-gamma-D-Glu-L-Lys-D-Ala-D-Ala)-di-trans,octa-cis-undecaprenyl diphosphate + UMP. Its pathway is cell wall biogenesis; peptidoglycan biosynthesis. Functionally, catalyzes the initial step of the lipid cycle reactions in the biosynthesis of the cell wall peptidoglycan: transfers peptidoglycan precursor phospho-MurNAc-pentapeptide from UDP-MurNAc-pentapeptide onto the lipid carrier undecaprenyl phosphate, yielding undecaprenyl-pyrophosphoryl-MurNAc-pentapeptide, known as lipid I. The chain is Phospho-N-acetylmuramoyl-pentapeptide-transferase from Lactobacillus gasseri (strain ATCC 33323 / DSM 20243 / BCRC 14619 / CIP 102991 / JCM 1131 / KCTC 3163 / NCIMB 11718 / NCTC 13722 / AM63).